The chain runs to 129 residues: Small ribosomal subunit protein uS11 (129 aa).

It belongs to the universal ribosomal protein uS11 family. In terms of assembly, part of the 30S ribosomal subunit. Interacts with proteins S7 and S18. Binds to IF-3.

Its function is as follows. Located on the platform of the 30S subunit, it bridges several disparate RNA helices of the 16S rRNA. Forms part of the Shine-Dalgarno cleft in the 70S ribosome. The polypeptide is Small ribosomal subunit protein uS11 (Pseudomonas fluorescens (strain SBW25)).